The chain runs to 131 residues: D-ribose pyranase (131 aa).

His-20 serves as the catalytic Proton donor. Residues Asp-28, His-98, and 120 to 122 (YAN) each bind substrate.

This sequence belongs to the RbsD / FucU family. RbsD subfamily. In terms of assembly, homodecamer.

The protein localises to the cytoplasm. It catalyses the reaction beta-D-ribopyranose = beta-D-ribofuranose. It functions in the pathway carbohydrate metabolism; D-ribose degradation; D-ribose 5-phosphate from beta-D-ribopyranose: step 1/2. Catalyzes the interconversion of beta-pyran and beta-furan forms of D-ribose. The polypeptide is D-ribose pyranase (Bacillus cytotoxicus (strain DSM 22905 / CIP 110041 / 391-98 / NVH 391-98)).